Reading from the N-terminus, the 238-residue chain is Ribose-5-phosphate isomerase A (238 aa).

Substrate contacts are provided by residues 30 to 33 (SGST), 87 to 90 (DGAD), and 100 to 103 (KGGG). E109 (proton acceptor) is an active-site residue. K127 is a substrate binding site.

The protein belongs to the ribose 5-phosphate isomerase family. As to quaternary structure, homodimer.

It catalyses the reaction aldehydo-D-ribose 5-phosphate = D-ribulose 5-phosphate. It functions in the pathway carbohydrate degradation; pentose phosphate pathway; D-ribose 5-phosphate from D-ribulose 5-phosphate (non-oxidative stage): step 1/1. Functionally, catalyzes the reversible conversion of ribose-5-phosphate to ribulose 5-phosphate. The sequence is that of Ribose-5-phosphate isomerase A from Prochlorococcus marinus (strain MIT 9303).